Here is a 94-residue protein sequence, read N- to C-terminus: Aspartyl/glutamyl-tRNA(Asn/Gln) amidotransferase subunit C (94 aa).

The protein belongs to the GatC family. As to quaternary structure, heterotrimer of A, B and C subunits.

The enzyme catalyses L-glutamyl-tRNA(Gln) + L-glutamine + ATP + H2O = L-glutaminyl-tRNA(Gln) + L-glutamate + ADP + phosphate + H(+). It carries out the reaction L-aspartyl-tRNA(Asn) + L-glutamine + ATP + H2O = L-asparaginyl-tRNA(Asn) + L-glutamate + ADP + phosphate + 2 H(+). In terms of biological role, allows the formation of correctly charged Asn-tRNA(Asn) or Gln-tRNA(Gln) through the transamidation of misacylated Asp-tRNA(Asn) or Glu-tRNA(Gln) in organisms which lack either or both of asparaginyl-tRNA or glutaminyl-tRNA synthetases. The reaction takes place in the presence of glutamine and ATP through an activated phospho-Asp-tRNA(Asn) or phospho-Glu-tRNA(Gln). This is Aspartyl/glutamyl-tRNA(Asn/Gln) amidotransferase subunit C from Opitutus terrae (strain DSM 11246 / JCM 15787 / PB90-1).